The primary structure comprises 467 residues: Ribulose bisphosphate carboxylase large chain (467 aa).

At lysine 5 the chain carries N6,N6,N6-trimethyllysine. Asparagine 114 and threonine 164 together coordinate substrate. The active-site Proton acceptor is lysine 166. Lysine 168 is a binding site for substrate. Residues lysine 192, aspartate 194, and glutamate 195 each contribute to the Mg(2+) site. Residue lysine 192 is modified to N6-carboxylysine. Histidine 285 functions as the Proton acceptor in the catalytic mechanism. Arginine 286, histidine 318, and serine 370 together coordinate substrate.

The protein belongs to the RuBisCO large chain family. Type I subfamily. Heterohexadecamer of 8 large chains and 8 small chains; disulfide-linked. The disulfide link is formed within the large subunit homodimers. It depends on Mg(2+) as a cofactor. Post-translationally, the disulfide bond which can form in the large chain dimeric partners within the hexadecamer appears to be associated with oxidative stress and protein turnover.

Its subcellular location is the plastid. It localises to the chloroplast. The enzyme catalyses 2 (2R)-3-phosphoglycerate + 2 H(+) = D-ribulose 1,5-bisphosphate + CO2 + H2O. It carries out the reaction D-ribulose 1,5-bisphosphate + O2 = 2-phosphoglycolate + (2R)-3-phosphoglycerate + 2 H(+). Its function is as follows. RuBisCO catalyzes two reactions: the carboxylation of D-ribulose 1,5-bisphosphate, the primary event in carbon dioxide fixation, as well as the oxidative fragmentation of the pentose substrate in the photorespiration process. Both reactions occur simultaneously and in competition at the same active site. This Eriodictyon californicum (California yerba santa) protein is Ribulose bisphosphate carboxylase large chain.